The following is a 467-amino-acid chain: ATP-dependent protease ATPase subunit HslU (467 aa).

ATP-binding positions include Ile18, 60–65, Asp280, Glu345, and Arg417; that span reads GVGKTE.

This sequence belongs to the ClpX chaperone family. HslU subfamily. In terms of assembly, a double ring-shaped homohexamer of HslV is capped on each side by a ring-shaped HslU homohexamer. The assembly of the HslU/HslV complex is dependent on binding of ATP.

It localises to the cytoplasm. Functionally, ATPase subunit of a proteasome-like degradation complex; this subunit has chaperone activity. The binding of ATP and its subsequent hydrolysis by HslU are essential for unfolding of protein substrates subsequently hydrolyzed by HslV. HslU recognizes the N-terminal part of its protein substrates and unfolds these before they are guided to HslV for hydrolysis. This Lactobacillus helveticus (strain DPC 4571) protein is ATP-dependent protease ATPase subunit HslU.